Here is a 278-residue protein sequence, read N- to C-terminus: ATPase SWSAP1 (278 aa).

The segment at 237-278 (SPEKKDSSAGSQSLTLGCDNLPGPGSPLDGILTSETGADSKT) is disordered. Residues 269–278 (TSETGADSKT) show a composition bias toward polar residues.

As to quaternary structure, interacts with ZSWIM7; they form a functional complex involved in homologous recombination repair and stabilize each other. Interacts with RAD51, RAD51B, RAD51C, RAD51D and XRCC3; involved in homologous recombination repair.

It localises to the nucleus. Functionally, ATPase which is preferentially stimulated by single-stranded DNA and is involved in homologous recombination repair (HRR). Has a DNA-binding activity which is independent of its ATPase activity. This is ATPase SWSAP1 (Swsap1) from Mus musculus (Mouse).